The primary structure comprises 342 residues: tRNA N6-adenosine threonylcarbamoyltransferase (342 aa).

The Fe cation site is built by His120 and His124. Substrate-binding positions include 142-146 (VVSGG), Asp175, Gly188, Asp192, and Asn281. Residue Asp310 coordinates Fe cation.

The protein belongs to the KAE1 / TsaD family. Fe(2+) is required as a cofactor.

Its subcellular location is the cytoplasm. It carries out the reaction L-threonylcarbamoyladenylate + adenosine(37) in tRNA = N(6)-L-threonylcarbamoyladenosine(37) in tRNA + AMP + H(+). Its function is as follows. Required for the formation of a threonylcarbamoyl group on adenosine at position 37 (t(6)A37) in tRNAs that read codons beginning with adenine. Is involved in the transfer of the threonylcarbamoyl moiety of threonylcarbamoyl-AMP (TC-AMP) to the N6 group of A37, together with TsaE and TsaB. TsaD likely plays a direct catalytic role in this reaction. The protein is tRNA N6-adenosine threonylcarbamoyltransferase of Geobacillus kaustophilus (strain HTA426).